A 268-amino-acid polypeptide reads, in one-letter code: MSSMKIAIAGASGRMGRMLIEAVLAAPDATLAGALDRTGSPQLGQDAGAFLGKQTGVALTDDIERVCAEADYLIDFTRPEGTLAHLDAALRHDVKLVIGTTGFSEPQKAQLRAAGGKIALVFSANMSVGVNVTMKLLEFAAKQFAQGYDIEIIEAHHRHKVDAPSGTALMMGETIAAATGRTLDDCAVYGRHGVTGERDPSTIGFSAIRGGDIVGDHTVLFAGIGERIEITHKSASRVSYAQGALRAARFLAGHQAGFFDMQDVLGLR.

NAD(+)-binding positions include G10–M15 and D36. R37 serves as a coordination point for NADP(+). NAD(+)-binding positions include G99–T101 and S123–M126. Catalysis depends on H156, which acts as the Proton donor/acceptor. Residue H157 coordinates (S)-2,3,4,5-tetrahydrodipicolinate. K160 (proton donor) is an active-site residue. G166–T167 is a (S)-2,3,4,5-tetrahydrodipicolinate binding site.

The protein belongs to the DapB family.

The protein localises to the cytoplasm. The catalysed reaction is (S)-2,3,4,5-tetrahydrodipicolinate + NAD(+) + H2O = (2S,4S)-4-hydroxy-2,3,4,5-tetrahydrodipicolinate + NADH + H(+). The enzyme catalyses (S)-2,3,4,5-tetrahydrodipicolinate + NADP(+) + H2O = (2S,4S)-4-hydroxy-2,3,4,5-tetrahydrodipicolinate + NADPH + H(+). It participates in amino-acid biosynthesis; L-lysine biosynthesis via DAP pathway; (S)-tetrahydrodipicolinate from L-aspartate: step 4/4. In terms of biological role, catalyzes the conversion of 4-hydroxy-tetrahydrodipicolinate (HTPA) to tetrahydrodipicolinate. This is 4-hydroxy-tetrahydrodipicolinate reductase from Burkholderia pseudomallei (strain 1710b).